Reading from the N-terminus, the 145-residue chain is Synaptojanin-2-binding protein (145 aa).

Over 1 to 117 the chain is Cytoplasmic; sequence MNGRVDYLVT…GHRGEGDPSG (117 aa). One can recognise a PDZ domain in the interval 13 to 100; the sequence is EINLTRGPSG…AVSLRVQHRL (88 aa). A helical membrane pass occupies residues 118–138; the sequence is IPIFMVLVPVFALTMVAAWAF. The Mitochondrial intermembrane segment spans residues 139-145; sequence MRYRQQL.

Binds (via the PDZ domain) to isoform 2A of SYNJ2 (via the unique motif in the C-terminus). Interacts (via C-terminus) with RALBP1. Interacts (via PDZ domain) with ACVR2A (via C-terminus) and ACVR2B (via C-terminus). Forms a ternary complex with ACVR2A and RALBP1. Interacts with MAPK12. Interacts with DLL1; enhances DLL1 protein stability, and promotes notch signaling in endothelial cells.

It is found in the mitochondrion outer membrane. Its function is as follows. Regulates endocytosis of activin type 2 receptor kinases through the Ral/RALBP1-dependent pathway and may be involved in suppression of activin-induced signal transduction. This Homo sapiens (Human) protein is Synaptojanin-2-binding protein (SYNJ2BP).